Reading from the N-terminus, the 93-residue chain is Em protein H5 (93 aa).

Residues 1–93 (MASGQQERSE…IDESKFKTKS (93 aa)) are disordered. 3 stretches are compositionally biased toward basic and acidic residues: residues 7–19 (ERSELDRMAREGE), 32–62 (EAQEHLADGRSRGGETRKEQLGEEGYREMGR), and 73–93 (GGERAAREGIEIDESKFKTKS).

The protein belongs to the small hydrophilic plant seed protein family.

In terms of biological role, it is thought to provide protection for the cytoplasm during the desiccation stage of embryo development. The sequence is that of Em protein H5 (EMH5) from Triticum aestivum (Wheat).